The chain runs to 393 residues: tRNA(Met) cytidine acetate ligase (393 aa).

ATP-binding residues include Gly-81, Asn-142, and Arg-167.

Belongs to the TmcAL family.

The protein resides in the cytoplasm. It catalyses the reaction cytidine(34) in elongator tRNA(Met) + acetate + ATP = N(4)-acetylcytidine(34) in elongator tRNA(Met) + AMP + diphosphate. Functionally, catalyzes the formation of N(4)-acetylcytidine (ac(4)C) at the wobble position of elongator tRNA(Met), using acetate and ATP as substrates. First activates an acetate ion to form acetyladenylate (Ac-AMP) and then transfers the acetyl group to tRNA to form ac(4)C34. The polypeptide is tRNA(Met) cytidine acetate ligase (Bacillus cereus (strain ATCC 10987 / NRS 248)).